Here is a 344-residue protein sequence, read N- to C-terminus: Methionine import ATP-binding protein MetN (344 aa).

The ABC transporter domain maps to 2–241 (IELQGLSQRF…PQHEVTRAMI (240 aa)). Residue 38–45 (GRSGAGKS) coordinates ATP.

The protein belongs to the ABC transporter superfamily. Methionine importer (TC 3.A.1.24) family. The complex is composed of two ATP-binding proteins (MetN), two transmembrane proteins (MetI) and a solute-binding protein (MetQ).

The protein localises to the cell inner membrane. The enzyme catalyses L-methionine(out) + ATP + H2O = L-methionine(in) + ADP + phosphate + H(+). It catalyses the reaction D-methionine(out) + ATP + H2O = D-methionine(in) + ADP + phosphate + H(+). Part of the ABC transporter complex MetNIQ involved in methionine import. Responsible for energy coupling to the transport system. The protein is Methionine import ATP-binding protein MetN of Cupriavidus pinatubonensis (strain JMP 134 / LMG 1197) (Cupriavidus necator (strain JMP 134)).